The following is a 368-amino-acid chain: Phosphate acyltransferase (368 aa).

Residues 337–368 (LGDGEHDAGGAGQASPAAGHHAEPSAAQSSKA) form a disordered region.

This sequence belongs to the PlsX family. In terms of assembly, homodimer. Probably interacts with PlsY.

The protein resides in the cytoplasm. The catalysed reaction is a fatty acyl-[ACP] + phosphate = an acyl phosphate + holo-[ACP]. It participates in lipid metabolism; phospholipid metabolism. In terms of biological role, catalyzes the reversible formation of acyl-phosphate (acyl-PO(4)) from acyl-[acyl-carrier-protein] (acyl-ACP). This enzyme utilizes acyl-ACP as fatty acyl donor, but not acyl-CoA. This chain is Phosphate acyltransferase, found in Burkholderia orbicola (strain MC0-3).